The following is a 538-amino-acid chain: Bifunctional purine biosynthesis protein PurH (538 aa).

Positions 8–158 constitute an MGS-like domain; the sequence is IPAPDKVEIK…KNHAYVTILT (151 aa).

Belongs to the PurH family.

The enzyme catalyses (6R)-10-formyltetrahydrofolate + 5-amino-1-(5-phospho-beta-D-ribosyl)imidazole-4-carboxamide = 5-formamido-1-(5-phospho-D-ribosyl)imidazole-4-carboxamide + (6S)-5,6,7,8-tetrahydrofolate. It catalyses the reaction IMP + H2O = 5-formamido-1-(5-phospho-D-ribosyl)imidazole-4-carboxamide. It functions in the pathway purine metabolism; IMP biosynthesis via de novo pathway; 5-formamido-1-(5-phospho-D-ribosyl)imidazole-4-carboxamide from 5-amino-1-(5-phospho-D-ribosyl)imidazole-4-carboxamide (10-formyl THF route): step 1/1. The protein operates within purine metabolism; IMP biosynthesis via de novo pathway; IMP from 5-formamido-1-(5-phospho-D-ribosyl)imidazole-4-carboxamide: step 1/1. The sequence is that of Bifunctional purine biosynthesis protein PurH from Rhizobium etli (strain CIAT 652).